The sequence spans 710 residues: Ent-copalyl diphosphate synthase 1 (710 aa).

Substrate is bound at residue Lys145. Mg(2+)-binding residues include Asp277 and Asp279. Residues 277–280 (DIDD) carry the DXDD motif motif. Lys364 serves as a coordination point for substrate.

This sequence belongs to the terpene synthase family. Tpsc subfamily. It depends on Mg(2+) as a cofactor. Expressed in germinating seeds and leaves.

It carries out the reaction (2E,6E,10E)-geranylgeranyl diphosphate = ent-copalyl diphosphate. It participates in plant hormone biosynthesis; gibberellin biosynthesis. It functions in the pathway secondary metabolite biosynthesis; terpenoid biosynthesis. Involved in the biosynthesis of ent-kaurene diterpenoids natural products such as oridonin, miltiradiene, eriocalyxin B and nezukol, known to exhibit antitumor, anti-inflammatory and antibacterial activities, and in the production of gibberellins phytohormones. Catalyzes the conversion of (2E,6E,10E)-geranylgeranyl diphosphate (GGPP) to ent-copalyl diphosphate (ent-CPP). This Isodon eriocalyx (Plectranthus eriocalyx) protein is Ent-copalyl diphosphate synthase 1.